The primary structure comprises 230 residues: Protein-L-isoaspartate O-methyltransferase (230 aa).

Residue serine 65 is part of the active site.

Belongs to the methyltransferase superfamily. L-isoaspartyl/D-aspartyl protein methyltransferase family. Monomer. In terms of tissue distribution, highest contents in seeds.

It is found in the cytoplasm. The enzyme catalyses [protein]-L-isoaspartate + S-adenosyl-L-methionine = [protein]-L-isoaspartate alpha-methyl ester + S-adenosyl-L-homocysteine. Functionally, catalyzes the methyl esterification of L-isoaspartyl residues in peptides and proteins that result from spontaneous decomposition of normal L-aspartyl and L-asparaginyl residues. It plays a role in the repair and/or degradation of damaged proteins. This enzyme does not act on D-aspartyl residues. This is Protein-L-isoaspartate O-methyltransferase (PCM) from Triticum aestivum (Wheat).